The primary structure comprises 311 residues: Ribose-phosphate pyrophosphokinase (311 aa).

Residues 34-36 (DQE) and 93-94 (RQ) contribute to the ATP site. His127 and Asp168 together coordinate Mg(2+). The active site involves Lys191. D-ribose 5-phosphate contacts are provided by residues Arg193, Asp217, and 221 to 225 (DSGGT).

This sequence belongs to the ribose-phosphate pyrophosphokinase family. Class I subfamily. Homohexamer. It depends on Mg(2+) as a cofactor.

It localises to the cytoplasm. The enzyme catalyses D-ribose 5-phosphate + ATP = 5-phospho-alpha-D-ribose 1-diphosphate + AMP + H(+). It functions in the pathway metabolic intermediate biosynthesis; 5-phospho-alpha-D-ribose 1-diphosphate biosynthesis; 5-phospho-alpha-D-ribose 1-diphosphate from D-ribose 5-phosphate (route I): step 1/1. Involved in the biosynthesis of the central metabolite phospho-alpha-D-ribosyl-1-pyrophosphate (PRPP) via the transfer of pyrophosphoryl group from ATP to 1-hydroxyl of ribose-5-phosphate (Rib-5-P). The chain is Ribose-phosphate pyrophosphokinase from Mesorhizobium japonicum (strain LMG 29417 / CECT 9101 / MAFF 303099) (Mesorhizobium loti (strain MAFF 303099)).